The sequence spans 400 residues: MPVSHPTVYEPLTEQGAISLAVRLGLFPEGTPLACREIGDGNLNLVFRVVDQQTKKGIIVKQALPYAKVVGESWPLTLKRAVIESNALRTFASYVPQYVPKVYYSDESLAITVMEDLSHLQIARKGLIEGKTYPLLSQHIGEFIAKTSFYTSDFGMNQQEKKQLAQSFVNPELCKITEDLVFTDPFFNHETNNFEDELRDDVEALWNDDKLHLEAAKLKRKFLTEGDALIHGDLHTGSIFASDEETKIIDPEFAFYGPFGFDIGQFFANLLLNALSRPEQQQEPLFAHIDKTWDVFSTVFSDLWRTHNVEPYAKTEGLLEDVLHHTFIDAIGFAGCEVIRRTIGLAHVADLDGIEDKEERLQAKRYALRLGRSLILQRETLSSTKEIRSLFAQTVLAATN.

ATP is bound by residues Asn-44, Lys-61, and 115 to 117 (EDL). Substrate is bound at residue Asp-233. 250–252 (DPE) provides a ligand contact to ATP. Arg-340 contributes to the substrate binding site.

The protein belongs to the methylthioribose kinase family. Homodimer.

The catalysed reaction is 5-(methylsulfanyl)-D-ribose + ATP = 5-(methylsulfanyl)-alpha-D-ribose 1-phosphate + ADP + H(+). The protein operates within amino-acid biosynthesis; L-methionine biosynthesis via salvage pathway; S-methyl-5-thio-alpha-D-ribose 1-phosphate from S-methyl-5'-thioadenosine (hydrolase route): step 2/2. In terms of biological role, catalyzes the phosphorylation of methylthioribose into methylthioribose-1-phosphate. This chain is Methylthioribose kinase, found in Geobacillus sp. (strain WCH70).